A 167-amino-acid chain; its full sequence is Beta-3 adrenergic receptor (167 aa).

Residues 1 to 25 (RVGADAEAQECHSNPRCCSFASNMP) are Extracellular-facing. A disulfide bond links Cys-11 and Cys-17. Residues 26–47 (YALLSSSVSFYLPLLVMLFVYA) traverse the membrane as a helical segment. Topologically, residues 48 to 114 (RVFVVAKRQR…LPLREHRALR (67 aa)) are cytoplasmic. Residues 66–97 (RFPPEESPRSPSRSPSPVAGGTGEAPDGVPSC) form a disordered region. A helical transmembrane segment spans residues 115–136 (TLGLIMGIFSLCWLPFFLANVL). At 137–148 (RALAGPSIVPNG) the chain is on the extracellular side. The chain crosses the membrane as a helical span at residues 149-167 (VFIALNWLGYANSAFNPLI).

Belongs to the G-protein coupled receptor 1 family. Adrenergic receptor subfamily. ADRB3 sub-subfamily. In terms of assembly, interacts with ARRDC3.

It is found in the cell membrane. In terms of biological role, beta-adrenergic receptors mediate the catecholamine-induced activation of adenylate cyclase through the action of G proteins. Beta-3 is involved in the regulation of lipolysis and thermogenesis. This Meriones unguiculatus (Mongolian jird) protein is Beta-3 adrenergic receptor (ADRB3).